The following is a 389-amino-acid chain: Leucine aminopeptidase 1 (389 aa).

The N-terminal stretch at 1–18 (MKSAALLLPLYAAAFAAA) is a signal peptide. A propeptide spanning residues 19–89 (AFHHEHAQAV…TLKRRINAAS (71 aa)) is cleaved from the precursor. N-linked (GlcNAc...) asparagine glycosylation occurs at Asn-99. Zn(2+) is bound by residues His-188, Asp-207, Glu-246, and Asp-273. A disulfide bridge links Cys-322 with Cys-326. His-355 contributes to the Zn(2+) binding site.

Belongs to the peptidase M28 family. M28E subfamily. In terms of assembly, monomer. Zn(2+) serves as cofactor.

The protein localises to the secreted. Functionally, extracellular aminopeptidase that allows assimilation of proteinaceous substrates. The sequence is that of Leucine aminopeptidase 1 (lap1) from Pyrenophora teres f. teres (strain 0-1) (Barley net blotch fungus).